The primary structure comprises 144 residues: Nucleoside diphosphate kinase (144 aa).

Residues Lys11, Phe59, Arg87, Thr93, Arg104, and Asn114 each contribute to the ATP site. The Pros-phosphohistidine intermediate role is filled by His117.

This sequence belongs to the NDK family. Homotetramer. Mg(2+) serves as cofactor.

The protein localises to the cytoplasm. The catalysed reaction is a 2'-deoxyribonucleoside 5'-diphosphate + ATP = a 2'-deoxyribonucleoside 5'-triphosphate + ADP. It catalyses the reaction a ribonucleoside 5'-diphosphate + ATP = a ribonucleoside 5'-triphosphate + ADP. In terms of biological role, major role in the synthesis of nucleoside triphosphates other than ATP. The ATP gamma phosphate is transferred to the NDP beta phosphate via a ping-pong mechanism, using a phosphorylated active-site intermediate. The sequence is that of Nucleoside diphosphate kinase from Psychromonas ingrahamii (strain DSM 17664 / CCUG 51855 / 37).